Reading from the N-terminus, the 354-residue chain is Hyaluronan and proteoglycan link protein 1 (354 aa).

A propeptide spanning residues 1-15 (MKSLLLLVLISFCWA) is cleaved from the precursor. Residues Asn-21 and Asn-56 are each glycosylated (N-linked (GlcNAc...) asparagine). The Ig-like V-type domain maps to 38–152 (PRLLVEAEQA…EGLEDDTAVV (115 aa)). 5 disulfides stabilise this stretch: Cys-61/Cys-139, Cys-181/Cys-252, Cys-205/Cys-226, Cys-279/Cys-349, and Cys-304/Cys-325. Link domains are found at residues 159-254 (VVFP…FCFT) and 259-351 (GRFY…YCFR).

The protein belongs to the HAPLN family.

Its subcellular location is the secreted. The protein localises to the extracellular space. It localises to the extracellular matrix. Stabilizes the aggregates of proteoglycan monomers with hyaluronic acid in the extracellular cartilage matrix. The chain is Hyaluronan and proteoglycan link protein 1 (HAPLN1) from Bos taurus (Bovine).